The following is a 306-amino-acid chain: Aspartate carbamoyltransferase catalytic subunit (306 aa).

Carbamoyl phosphate-binding residues include arginine 55 and threonine 56. Lysine 84 lines the L-aspartate pocket. Carbamoyl phosphate-binding residues include arginine 105, histidine 133, and glutamine 136. Arginine 166 and arginine 227 together coordinate L-aspartate. Carbamoyl phosphate-binding residues include leucine 265 and proline 266.

The protein belongs to the aspartate/ornithine carbamoyltransferase superfamily. ATCase family. In terms of assembly, heterododecamer (2C3:3R2) of six catalytic PyrB chains organized as two trimers (C3), and six regulatory PyrI chains organized as three dimers (R2).

It carries out the reaction carbamoyl phosphate + L-aspartate = N-carbamoyl-L-aspartate + phosphate + H(+). It functions in the pathway pyrimidine metabolism; UMP biosynthesis via de novo pathway; (S)-dihydroorotate from bicarbonate: step 2/3. Functionally, catalyzes the condensation of carbamoyl phosphate and aspartate to form carbamoyl aspartate and inorganic phosphate, the committed step in the de novo pyrimidine nucleotide biosynthesis pathway. This chain is Aspartate carbamoyltransferase catalytic subunit, found in Aeromonas hydrophila subsp. hydrophila (strain ATCC 7966 / DSM 30187 / BCRC 13018 / CCUG 14551 / JCM 1027 / KCTC 2358 / NCIMB 9240 / NCTC 8049).